A 195-amino-acid chain; its full sequence is Dephospho-CoA kinase (195 aa).

The region spanning 2 to 195 (IISLTGGIGV…DIVDSLNLNT (194 aa)) is the DPCK domain. Residue 10-15 (GVGKSF) coordinates ATP.

It belongs to the CoaE family.

Its subcellular location is the cytoplasm. The enzyme catalyses 3'-dephospho-CoA + ATP = ADP + CoA + H(+). The protein operates within cofactor biosynthesis; coenzyme A biosynthesis; CoA from (R)-pantothenate: step 5/5. In terms of biological role, catalyzes the phosphorylation of the 3'-hydroxyl group of dephosphocoenzyme A to form coenzyme A. In Wolbachia pipientis wMel, this protein is Dephospho-CoA kinase.